The primary structure comprises 500 residues: L-arabinose isomerase (500 aa).

Positions 306, 333, 350, and 450 each coordinate Mn(2+).

This sequence belongs to the arabinose isomerase family. As to quaternary structure, homohexamer. Mn(2+) serves as cofactor.

It catalyses the reaction beta-L-arabinopyranose = L-ribulose. It functions in the pathway carbohydrate degradation; L-arabinose degradation via L-ribulose; D-xylulose 5-phosphate from L-arabinose (bacterial route): step 1/3. Its function is as follows. Catalyzes the conversion of L-arabinose to L-ribulose. This chain is L-arabinose isomerase (araA), found in Escherichia coli (strain K12).